A 208-amino-acid chain; its full sequence is Adenylate kinase (208 aa).

10 to 15 (GAGKGT) contacts ATP. Residues 30–59 (STGEMLRAAVAAGTPVGLKAKDVMASGGLV) are NMP. AMP-binding positions include Thr-31, Arg-36, 57-59 (GLV), 85-88 (GFPR), and Gln-92. Positions 126–142 (SRVAEMTARGEQVRADD) are LID. Position 127 (Arg-127) interacts with ATP. The AMP site is built by Arg-139 and Arg-150. An ATP-binding site is contributed by Met-178.

The protein belongs to the adenylate kinase family. As to quaternary structure, monomer.

The protein resides in the cytoplasm. The catalysed reaction is AMP + ATP = 2 ADP. It participates in purine metabolism; AMP biosynthesis via salvage pathway; AMP from ADP: step 1/1. In terms of biological role, catalyzes the reversible transfer of the terminal phosphate group between ATP and AMP. Plays an important role in cellular energy homeostasis and in adenine nucleotide metabolism. The chain is Adenylate kinase from Nitrobacter hamburgensis (strain DSM 10229 / NCIMB 13809 / X14).